The following is a 436-amino-acid chain: Hydrogenobyrinate a,c-diamide synthase (436 aa).

The GATase cobBQ-type domain occupies 244 to 435; the sequence is RIAVARDDAF…MHVIDFSGEA (192 aa). Cys-327 functions as the Nucleophile in the catalytic mechanism.

This sequence belongs to the CobB/CbiA family. The cofactor is Mg(2+).

It catalyses the reaction hydrogenobyrinate + 2 L-glutamine + 2 ATP + 2 H2O = hydrogenobyrinate a,c-diamide + 2 L-glutamate + 2 ADP + 2 phosphate + 2 H(+). The protein operates within cofactor biosynthesis; adenosylcobalamin biosynthesis; cob(II)yrinate a,c-diamide from precorrin-2 (aerobic route): step 9/10. Its function is as follows. Catalyzes the ATP-dependent amidation of the two carboxylate groups at positions a and c of hydrogenobyrinate, using either L-glutamine or ammonia as the nitrogen source. This Brucella abortus biovar 1 (strain 9-941) protein is Hydrogenobyrinate a,c-diamide synthase.